A 97-amino-acid chain; its full sequence is Protein MxiI (97 aa).

It to S.typhimurium PrgJ.

Its function is as follows. Necessary for the secretion of IPA invasins. The chain is Protein MxiI (mxiI) from Shigella flexneri.